The following is a 110-amino-acid chain: Large ribosomal subunit protein uL22 (110 aa).

Residues 85–95 (RGTASKIRKPT) show a composition bias toward basic residues. Residues 85–110 (RGTASKIRKPTSHVMVEVSKAQKKEA) are disordered.

The protein belongs to the universal ribosomal protein uL22 family. Part of the 50S ribosomal subunit.

In terms of biological role, this protein binds specifically to 23S rRNA; its binding is stimulated by other ribosomal proteins, e.g. L4, L17, and L20. It is important during the early stages of 50S assembly. It makes multiple contacts with different domains of the 23S rRNA in the assembled 50S subunit and ribosome. The globular domain of the protein is located near the polypeptide exit tunnel on the outside of the subunit, while an extended beta-hairpin is found that lines the wall of the exit tunnel in the center of the 70S ribosome. The protein is Large ribosomal subunit protein uL22 of Campylobacter curvus (strain 525.92).